Reading from the N-terminus, the 732-residue chain is Polyribonucleotide nucleotidyltransferase (732 aa).

The Mg(2+) site is built by aspartate 503 and aspartate 509. The region spanning 570-629 is the KH domain; the sequence is PRLTAIQVPVESIGLIIGKGGETIRSITEETGAEINIEDDGTVTIACSSNEGTKGAVEII. One can recognise an S1 motif domain in the interval 639–713; sequence GTVYIGKVRD…GKTRFALSIK (75 aa).

Belongs to the polyribonucleotide nucleotidyltransferase family. Requires Mg(2+) as cofactor.

The protein localises to the cytoplasm. The enzyme catalyses RNA(n+1) + phosphate = RNA(n) + a ribonucleoside 5'-diphosphate. Functionally, involved in mRNA degradation. Catalyzes the phosphorolysis of single-stranded polyribonucleotides processively in the 3'- to 5'-direction. The protein is Polyribonucleotide nucleotidyltransferase of Chlorobium phaeovibrioides (strain DSM 265 / 1930) (Prosthecochloris vibrioformis (strain DSM 265)).